Here is a 478-residue protein sequence, read N- to C-terminus: Aspartyl/glutamyl-tRNA(Asn/Gln) amidotransferase subunit B (478 aa).

The protein belongs to the GatB/GatE family. GatB subfamily. In terms of assembly, heterotrimer of A, B and C subunits.

It catalyses the reaction L-glutamyl-tRNA(Gln) + L-glutamine + ATP + H2O = L-glutaminyl-tRNA(Gln) + L-glutamate + ADP + phosphate + H(+). The catalysed reaction is L-aspartyl-tRNA(Asn) + L-glutamine + ATP + H2O = L-asparaginyl-tRNA(Asn) + L-glutamate + ADP + phosphate + 2 H(+). Allows the formation of correctly charged Asn-tRNA(Asn) or Gln-tRNA(Gln) through the transamidation of misacylated Asp-tRNA(Asn) or Glu-tRNA(Gln) in organisms which lack either or both of asparaginyl-tRNA or glutaminyl-tRNA synthetases. The reaction takes place in the presence of glutamine and ATP through an activated phospho-Asp-tRNA(Asn) or phospho-Glu-tRNA(Gln). The protein is Aspartyl/glutamyl-tRNA(Asn/Gln) amidotransferase subunit B of Dichelobacter nodosus (strain VCS1703A).